A 692-amino-acid polypeptide reads, in one-letter code: Small conductance calcium-activated potassium channel-like protein 3 (692 aa).

A helical transmembrane segment spans residues 270 to 290; sequence SLYLALFGVILMLVESEITAE. The chain crosses the membrane as a helical span at residues 313-333; the sequence is TIALLYHIILYHLNDIVLELV. The helical transmembrane segment at 349-369 threads the bilayer; it reads VIQFCIEFICCGICPLPGSGE. The chain crosses the membrane as a helical span at residues 401–421; sequence VILSCFMLCRSYLFARFMVLH. The helical transmembrane segment at 455–475 threads the bilayer; sequence PVLFLTTFTFIFWIIMSWMFV. Positions 492-512 form an intramembrane region, pore-forming; sequence YSNSLWFIAITFMLNGYGDIV. The chain crosses the membrane as a helical span at residues 520 to 540; that stretch reads FIAIFVGVVGAVISSILIAVI. Positions 667–683 are enriched in polar residues; the sequence is HSTPNVPHLQGLTSSPV. Residues 667-692 form a disordered region; it reads HSTPNVPHLQGLTSSPVPSDRYDNRF.

Belongs to the potassium channel KCNN family. SK subfamily. As to quaternary structure, heterooligomer.

The protein resides in the membrane. Functionally, forms a voltage-independent potassium channel activated by intracellular calcium. The chain is Small conductance calcium-activated potassium channel-like protein 3 (kcnl-3) from Caenorhabditis elegans.